Here is a 208-residue protein sequence, read N- to C-terminus: Meiotically up-regulated gene 9 protein (208 aa).

The segment at 77–114 is disordered; it reads VPASNEKAARVSNLKTVPSLKRENKEVNANSKPPVKQQ.

Has a role in meiosis. This is Meiotically up-regulated gene 9 protein (mug9) from Schizosaccharomyces pombe (strain 972 / ATCC 24843) (Fission yeast).